We begin with the raw amino-acid sequence, 161 residues long: ATP synthase subunit b (161 aa).

Residues 12 to 32 form a helical membrane-spanning segment; it reads IAFFLFVFFCMKYIWPNLISL.

This sequence belongs to the ATPase B chain family. F-type ATPases have 2 components, F(1) - the catalytic core - and F(0) - the membrane proton channel. F(1) has five subunits: alpha(3), beta(3), gamma(1), delta(1), epsilon(1). F(0) has three main subunits: a(1), b(2) and c(10-14). The alpha and beta chains form an alternating ring which encloses part of the gamma chain. F(1) is attached to F(0) by a central stalk formed by the gamma and epsilon chains, while a peripheral stalk is formed by the delta and b chains.

It is found in the cell membrane. F(1)F(0) ATP synthase produces ATP from ADP in the presence of a proton or sodium gradient. F-type ATPases consist of two structural domains, F(1) containing the extramembraneous catalytic core and F(0) containing the membrane proton channel, linked together by a central stalk and a peripheral stalk. During catalysis, ATP synthesis in the catalytic domain of F(1) is coupled via a rotary mechanism of the central stalk subunits to proton translocation. In terms of biological role, component of the F(0) channel, it forms part of the peripheral stalk, linking F(1) to F(0). This chain is ATP synthase subunit b, found in Wigglesworthia glossinidia brevipalpis.